A 902-amino-acid chain; its full sequence is Transcription factor FPSE_08121 (902 aa).

The disordered stretch occupies residues 1-47 (MVSPDNRPGTQGPSASAHAHDSRVPRKRPGSWDNNPSTAGNRAVKKR). Positions 52 to 81 (CVSCRDRKVRCDVVNGGPPCTNCRLDDVDC) form a DNA-binding region, zn(2)-C6 fungal-type. Disordered stretches follow at residues 92–189 (NPAR…EAEQ), 208–234 (HCEQ…PANP), 258–277 (ATEA…SANT), and 820–839 (TGVA…PNMT). Over residues 120–137 (TDADTAAPGPAPGSASAT) the composition is skewed to low complexity. Residues 168-177 (ETICDDDENE) show a composition bias toward acidic residues. Composition is skewed to polar residues over residues 178–187 (NNSWHNQQEA), 220–234 (GAAT…PANP), 262–277 (PPSS…SANT), and 826–839 (GQRS…PNMT).

The protein localises to the nucleus. Its function is as follows. Transcription factor; part of the Fusarium detoxification of benzoxazolinone cluster involved in the degradation of benzoxazolinones produced by the host plant. Maize, wheat, and rye produce the 2 benzoxazinone phytoanticipins 2,4-dihy-droxy-7-methoxy-1,4-benzoxazin-3-one (DIMBOA) and 2,4-dihydroxy-1,4-benzoxazin-3-one (DIBOA) that, due to their inherent instability once released, spontaneously degrade to the more stable corresponding benzoxazolinones, 6-methoxy-2-benzoxazolinone (MBOA) and 2-benzoxazolinone (BOA), respectively. FPSE_08121 positively regulates the expression of the FBD cluster gene FPSE_08120 in response to 2-aminophenol (2-AP) treatment and contributes quantitatively to benzoxazolinone tolerance. This chain is Transcription factor FPSE_08121, found in Fusarium pseudograminearum (strain CS3096) (Wheat and barley crown-rot fungus).